We begin with the raw amino-acid sequence, 425 residues long: tRNA(Ile)-lysidine synthase (425 aa).

27–32 (SGGLDS) lines the ATP pocket.

The protein belongs to the tRNA(Ile)-lysidine synthase family.

Its subcellular location is the cytoplasm. It carries out the reaction cytidine(34) in tRNA(Ile2) + L-lysine + ATP = lysidine(34) in tRNA(Ile2) + AMP + diphosphate + H(+). In terms of biological role, ligates lysine onto the cytidine present at position 34 of the AUA codon-specific tRNA(Ile) that contains the anticodon CAU, in an ATP-dependent manner. Cytidine is converted to lysidine, thus changing the amino acid specificity of the tRNA from methionine to isoleucine. The polypeptide is tRNA(Ile)-lysidine synthase (Streptococcus pneumoniae (strain JJA)).